Reading from the N-terminus, the 436-residue chain is MNEISIIILAAGNGTRMKSNKSKVLHTLCGEPMISHILKKSYEISNDVRIVLSYQFEEVKNSVLSEFKDVKIYKQDTINRPGTAGAAEAALENLNSKKTLVICGDMPLVEVNELKSLCDNTADISLSAFRAKNPFGYGRVVLNQQNVIKIVEQKDANDDEKKIDLCNAGAYCFDTNLLKNIIPLIKNENASREFYLTDAIELALKQGFMVKSVLVDETNFMGINDKFALSIAEEIMQNRIKENLMKNGVIMSLPDTIFIDSRAEFEGECKLEPNVVILGNSFIKNSHIKSGSVIEFSEVCDSDIGPMAHLRPNSKIYKTHIGNFVELKNASLNEVKAGHLSYLGDCEINSGTNIGCGTITCNYDGKKKHKTIIGKNVFIGSDTQLVAPVNVADDTLIAAGSTVTKDTNKGDLVITRGKQINKAGYFYKFFGKNDEK.

Residues 1 to 226 are pyrophosphorylase; the sequence is MNEISIIILA…ETNFMGINDK (226 aa). UDP-N-acetyl-alpha-D-glucosamine contacts are provided by residues 9 to 12, Lys-23, Gln-75, and 82 to 83; these read LAAG and GT. Asp-105 provides a ligand contact to Mg(2+). Gly-138, Glu-152, Asn-167, and Asn-224 together coordinate UDP-N-acetyl-alpha-D-glucosamine. Asn-224 contacts Mg(2+). Residues 227–247 form a linker region; that stretch reads FALSIAEEIMQNRIKENLMKN. The segment at 248-436 is N-acetyltransferase; that stretch reads GVIMSLPDTI…YKFFGKNDEK (189 aa). Arg-311 and Lys-328 together coordinate UDP-N-acetyl-alpha-D-glucosamine. Catalysis depends on His-339, which acts as the Proton acceptor. The UDP-N-acetyl-alpha-D-glucosamine site is built by Tyr-342 and Asn-353. Acetyl-CoA-binding positions include 362–363, Ser-381, Ala-399, and Arg-416; that span reads NY.

In the N-terminal section; belongs to the N-acetylglucosamine-1-phosphate uridyltransferase family. The protein in the C-terminal section; belongs to the transferase hexapeptide repeat family. As to quaternary structure, homotrimer. The cofactor is Mg(2+).

The protein localises to the cytoplasm. It carries out the reaction alpha-D-glucosamine 1-phosphate + acetyl-CoA = N-acetyl-alpha-D-glucosamine 1-phosphate + CoA + H(+). The enzyme catalyses N-acetyl-alpha-D-glucosamine 1-phosphate + UTP + H(+) = UDP-N-acetyl-alpha-D-glucosamine + diphosphate. The protein operates within nucleotide-sugar biosynthesis; UDP-N-acetyl-alpha-D-glucosamine biosynthesis; N-acetyl-alpha-D-glucosamine 1-phosphate from alpha-D-glucosamine 6-phosphate (route II): step 2/2. Its pathway is nucleotide-sugar biosynthesis; UDP-N-acetyl-alpha-D-glucosamine biosynthesis; UDP-N-acetyl-alpha-D-glucosamine from N-acetyl-alpha-D-glucosamine 1-phosphate: step 1/1. It participates in bacterial outer membrane biogenesis; LPS lipid A biosynthesis. Functionally, catalyzes the last two sequential reactions in the de novo biosynthetic pathway for UDP-N-acetylglucosamine (UDP-GlcNAc). The C-terminal domain catalyzes the transfer of acetyl group from acetyl coenzyme A to glucosamine-1-phosphate (GlcN-1-P) to produce N-acetylglucosamine-1-phosphate (GlcNAc-1-P), which is converted into UDP-GlcNAc by the transfer of uridine 5-monophosphate (from uridine 5-triphosphate), a reaction catalyzed by the N-terminal domain. The sequence is that of Bifunctional protein GlmU from Campylobacter fetus subsp. fetus (strain 82-40).